Here is a 443-residue protein sequence, read N- to C-terminus: KH domain-containing, RNA-binding, signal transduction-associated protein 1 (443 aa).

A disordered region spans residues methionine 1 to alanine 95. 2 positions are modified to phosphoserine: serine 18 and serine 20. Residue lysine 21 is modified to N6-acetyllysine. Serine 29 carries the phosphoserine modification. Threonine 33 bears the Phosphothreonine mark. Asymmetric dimethylarginine; by PRMT1 is present on residues arginine 45 and arginine 52. Serine 58 carries the phosphoserine modification. Positions threonine 61 to proline 72 are enriched in pro residues. Over residues serine 81–alanine 95 the composition is skewed to low complexity. Threonine 84 is modified (phosphothreonine; by MAPK1). Residues lysine 96 and lysine 102 each participate in a glycyl lysine isopeptide (Lys-Gly) (interchain with G-Cter in SUMO2) cross-link. Positions glutamate 100–methionine 260 are involved in homodimerization. The residue at position 113 (serine 113) is a Phosphoserine. A Glycyl lysine isopeptide (Lys-Gly) (interchain with G-Cter in SUMO2) cross-link involves residue lysine 139. At serine 150 the chain carries Phosphoserine. A KH domain is found at asparagine 171 to valine 197. Residue lysine 175 is modified to N6-acetyllysine; alternate. A Glycyl lysine isopeptide (Lys-Gly) (interchain with G-Cter in SUMO2); alternate cross-link involves residue lysine 175. At threonine 183 the chain carries Phosphothreonine. Residues proline 280–threonine 317 are disordered. An omega-N-methylarginine mark is found at arginine 282, arginine 284, and arginine 291. Residues glycine 283–alanine 293 are compositionally biased toward low complexity. Arginine 304 carries the post-translational modification Asymmetric dimethylarginine; by PRMT1. Over residues glycine 307 to glycine 316 the composition is skewed to low complexity. Residues arginine 310 and arginine 315 each carry the omega-N-methylarginine; by PRMT1 modification. At arginine 320 the chain carries Dimethylated arginine; alternate. Arginine 320 carries the post-translational modification Omega-N-methylarginine; by PRMT1; alternate. Arginine 325 bears the Omega-N-methylarginine; by PRMT1 mark. The tract at residues glycine 326–proline 345 is disordered. 2 positions are modified to dimethylated arginine; alternate: arginine 331 and arginine 340. An omega-N-methylarginine; by PRMT1; alternate mark is found at arginine 331 and arginine 340. Arginine 331 carries the asymmetric dimethylarginine; alternate modification. Residues glycine 351–tyrosine 443 form an interaction with HNRNPA1 region. Tyrosine 387 carries the post-translational modification Phosphotyrosine. Residue serine 390 is modified to Phosphoserine. An interaction with ZBTB7A region spans residues glycine 400–arginine 420. A disordered region spans residues tyrosine 411–tyrosine 443. Residue lysine 432 forms a Glycyl lysine isopeptide (Lys-Gly) (interchain with G-Cter in SUMO2) linkage. A compositionally biased stretch (basic and acidic residues) spans alanine 434–tyrosine 443. 3 positions are modified to phosphotyrosine; by PTK6: tyrosine 435, tyrosine 440, and tyrosine 443.

This sequence belongs to the KHDRBS family. As to quaternary structure, self-associates to form homooligomers when bound to RNA, oligomerization appears to be limited when binding to proteins. Interacts with KHDRBS3/SLIM-2. Forms a trimeric complex in the nucleus consisting of BANP, HDAC6 and KHDRBS1/SAM68; HDAC6 keeps KHDRBS1 in a deacetylated state which inhibits the inclusion of CD44 alternate exons. The complex is disrupted by MAPK1/MAPK3-mediated phosphorylation of BANP which results in BANP export to the cytoplasm. This facilitates acetylation of KHDRBS1 and CD44 variant exon inclusion. Interacts with KHDRBS2/SLIM-1; heterooligomer formation of KHDRBS family proteins may modulate RNA substrate specificity. Interacts with PIK3R1, PLCG1. Interacts with RASA1, GRB2, SRC, CBP, PRMT1, APC, HNRNPA1. Interacts with PTK6 (via SH3 and SH2 domains). Forms a complex with ILF2, ILF3, YLPM1, RBMX, NCOA5 and PPP1CA. Binds WBP4/FBP21 (via WW domains), FNBP4/FBP30 (via WW domains). Interacts (via Arg/Gly-rich-flanked Pro-rich regions) with FYN (via the SH3 domain). Interacts with the non-receptor tyrosine kinase SRMS; the interaction leads to phosphorylation of KHDRBS1. Interacts with ZBTB7A; negatively regulates KHDRBS1 splicing activity toward BCL2L1. Post-translationally, tyrosine phosphorylated by several non-receptor tyrosine kinases including LCK, FYN and JAK3. Also tyrosine phosphorylated by the non-receptor tyrosine kinase SRMS in an EGF-dependent manner. Phosphorylation by PTK6 negatively regulates its RNA binding ability. Phosphorylation by PTK6 at Tyr-440 dictates the nuclear localization of KHDRBS1. In terms of processing, acetylated. Positively correlates with ability to bind RNA. Deacetylated by HDAC6; this regulates alternative splicing by inhibiting the inclusion of CD44 alternate exons. Arginine methylation is required for nuclear localization, Inhibits interaction with Src-like SH3 domains, but not interaction with WW domains of WBP4/FBP21 and FNBP4/FBP30.

Its subcellular location is the nucleus. It localises to the cytoplasm. The protein localises to the membrane. Functionally, recruited and tyrosine phosphorylated by several receptor systems, for example the T-cell, leptin and insulin receptors. Once phosphorylated, functions as an adapter protein in signal transduction cascades by binding to SH2 and SH3 domain-containing proteins. Role in G2-M progression in the cell cycle. Represses CBP-dependent transcriptional activation apparently by competing with other nuclear factors for binding to CBP. Also acts as a putative regulator of mRNA stability and/or translation rates and mediates mRNA nuclear export. Positively regulates the association of constitutive transport element (CTE)-containing mRNA with large polyribosomes and translation initiation. May not be involved in the nucleocytoplasmic export of unspliced (CTE)-containing RNA species. RNA-binding protein that plays a role in the regulation of alternative splicing and influences mRNA splice site selection and exon inclusion. Binds to RNA containing 5'-[AU]UAA-3' as a bipartite motif spaced by more than 15 nucleotides. Binds poly(A). Can regulate CD44 alternative splicing in a Ras pathway-dependent manner. In cooperation with HNRNPA1 modulates alternative splicing of BCL2L1 by promoting splicing toward isoform Bcl-X(S), and of SMN1. Can regulate alternative splicing of NRXN1 and NRXN3 in the laminin G-like domain 6 containing the evolutionary conserved neurexin alternative spliced segment 4 (AS4) involved in neurexin selective targeting to postsynaptic partners. In a neuronal activity-dependent manner cooperates synergistically with KHDRBS2/SLIM-1 in regulation of NRXN1 exon skipping at AS4. The cooperation with KHDRBS2/SLIM-1 is antagonistic for regulation of NXRN3 alternative splicing at AS4. In Rattus norvegicus (Rat), this protein is KH domain-containing, RNA-binding, signal transduction-associated protein 1.